The primary structure comprises 134 residues: Profilin (134 aa).

The protein belongs to the profilin family. In terms of assembly, occurs in many kinds of cells as a complex with monomeric actin in a 1:1 ratio.

The protein localises to the cytoplasm. It localises to the cytoskeleton. Its function is as follows. Binds to actin and affects the structure of the cytoskeleton. At high concentrations, profilin prevents the polymerization of actin, whereas it enhances it at low concentrations. By binding to PIP2, it inhibits the formation of IP3 and DG. This chain is Profilin, found in Apium graveolens (Celery).